The following is a 591-amino-acid chain: Probable indole-3-acetic acid-amido synthetase GH3.11 (591 aa).

It belongs to the IAA-amido conjugating enzyme family. Expressed in etiolated and green seedlings, roots, callus and highly in flowers.

May catalyze the synthesis of indole-3-acetic acid (IAA)-amino acid conjugates, providing a mechanism for the plant to cope with the presence of excess auxin. This is Probable indole-3-acetic acid-amido synthetase GH3.11 (GH3.11) from Oryza sativa subsp. japonica (Rice).